Here is a 117-residue protein sequence, read N- to C-terminus: Ig heavy chain V region 186-1 (117 aa).

The first 19 residues, 1–19 (MGWSCIMLFLAATATGVHS), serve as a signal peptide directing secretion. A framework-1 region spans residues 20 to 49 (QVQLQQPGAELVKPGASVKLSCKASGYTFT). C41 and C115 are joined by a disulfide. A complementarity-determining-1 region spans residues 50–54 (SYWMH). The framework-2 stretch occupies residues 55 to 68 (WVKQRPGRGLEWIG). Residues 69–85 (RIDPNSGGTKYNEKFKS) are complementarity-determining-2. Residues 86-117 (KATLTVDTSSSTAYMQLHSLTSEDSAVYYCAR) are framework-3.

The chain is Ig heavy chain V region 186-1 from Mus musculus (Mouse).